Here is a 218-residue protein sequence, read N- to C-terminus: DNA-directed RNA polymerases IV and V subunit 5B (218 aa).

It belongs to the archaeal Rpo5/eukaryotic RPB5 RNA polymerase subunit family. In terms of assembly, component of the RNA polymerase IV and V complexes. Interacts with NRPD1. As to expression, expressed inleaves, flower buds, flowers and siliques.

It localises to the nucleus. Functionally, DNA-dependent RNA polymerase catalyzes the transcription of DNA into RNA using the four ribonucleoside triphosphates as substrates. Component of RNA polymerases IV and V which mediate short-interfering RNAs (siRNA) accumulation and subsequent RNA-directed DNA methylation-dependent (RdDM) transcriptional gene silencing (TGS) of endogenous repeated sequences, including transposable elements. The sequence is that of DNA-directed RNA polymerases IV and V subunit 5B (NRPD5B) from Arabidopsis thaliana (Mouse-ear cress).